Here is a 241-residue protein sequence, read N- to C-terminus: tRNA (guanine-N(1)-)-methyltransferase (241 aa).

Residues Gly112 and 131–136 contribute to the S-adenosyl-L-methionine site; that span reads LGDFVL.

It belongs to the RNA methyltransferase TrmD family. In terms of assembly, homodimer.

It is found in the cytoplasm. It catalyses the reaction guanosine(37) in tRNA + S-adenosyl-L-methionine = N(1)-methylguanosine(37) in tRNA + S-adenosyl-L-homocysteine + H(+). Specifically methylates guanosine-37 in various tRNAs. The chain is tRNA (guanine-N(1)-)-methyltransferase from Clostridium novyi (strain NT).